We begin with the raw amino-acid sequence, 216 residues long: Octanoyltransferase (216 aa).

The region spanning 30-216 (GEAGEAVWLL…KRQFFEVFGA (187 aa)) is the BPL/LPL catalytic domain. Residues 69-76 (RGGQYTYH), 149-151 (AIG), and 162-164 (GLS) contribute to the substrate site. C180 functions as the Acyl-thioester intermediate in the catalytic mechanism.

Belongs to the LipB family.

It is found in the cytoplasm. It catalyses the reaction octanoyl-[ACP] + L-lysyl-[protein] = N(6)-octanoyl-L-lysyl-[protein] + holo-[ACP] + H(+). Its pathway is protein modification; protein lipoylation via endogenous pathway; protein N(6)-(lipoyl)lysine from octanoyl-[acyl-carrier-protein]: step 1/2. Functionally, catalyzes the transfer of endogenously produced octanoic acid from octanoyl-acyl-carrier-protein onto the lipoyl domains of lipoate-dependent enzymes. Lipoyl-ACP can also act as a substrate although octanoyl-ACP is likely to be the physiological substrate. In Jannaschia sp. (strain CCS1), this protein is Octanoyltransferase.